The chain runs to 337 residues: Diacylglycerol O-acyltransferase 2-like protein 6 (337 aa).

2 consecutive transmembrane segments (helical) span residues 22-42 and 102-122; these read IPVYVLLGTLSILGMPYLLLF and YIILSHPHGILSYGAFINFAT.

Belongs to the diacylglycerol acyltransferase family.

It localises to the endoplasmic reticulum membrane. The enzyme catalyses 1,2-di-(9Z-octadecenoyl)-sn-glycerol + (9Z)-octadecenoyl-CoA = 1,2,3-tri-(9Z-octadecenoyl)-glycerol + CoA. Functionally, diglyceride acyltransferase that uses fatty acyl-CoA as substrate. Particularly active with oleate as a substrate. Has no wax synthase activity to produce wax esters. In Mus musculus (Mouse), this protein is Diacylglycerol O-acyltransferase 2-like protein 6 (Dgat2l6).